We begin with the raw amino-acid sequence, 109 residues long: Spermidine export protein MdtI (109 aa).

4 consecutive transmembrane segments (helical) span residues 6 to 26 (WVHA…NVFL), 36 to 56 (IFGL…SQAV), 64 to 84 (AYAL…WILF), and 88 to 108 (LNRK…MVKL).

It belongs to the drug/metabolite transporter (DMT) superfamily. Small multidrug resistance (SMR) (TC 2.A.7.1) family. MdtI subfamily. In terms of assembly, forms a complex with MdtJ.

Its subcellular location is the cell inner membrane. In terms of biological role, catalyzes the excretion of spermidine. The polypeptide is Spermidine export protein MdtI (Shigella dysenteriae serotype 1 (strain Sd197)).